Consider the following 118-residue polypeptide: NADH-ubiquinone oxidoreductase chain 3 (118 aa).

Transmembrane regions (helical) follow at residues 6–26 (IFVY…VSFL), 62–82 (LVSI…PWAV), and 87–107 (IGLF…IGFV).

This sequence belongs to the complex I subunit 3 family.

It is found in the mitochondrion membrane. The enzyme catalyses a ubiquinone + NADH + 5 H(+)(in) = a ubiquinol + NAD(+) + 4 H(+)(out). Its function is as follows. Core subunit of the mitochondrial membrane respiratory chain NADH dehydrogenase (Complex I) that is believed to belong to the minimal assembly required for catalysis. Complex I functions in the transfer of electrons from NADH to the respiratory chain. The immediate electron acceptor for the enzyme is believed to be ubiquinone. In Marchantia polymorpha (Common liverwort), this protein is NADH-ubiquinone oxidoreductase chain 3 (ND3).